Consider the following 337-residue polypeptide: DNA-directed RNA polymerase subunit alpha (337 aa).

Residues 1 to 233 (MVREEVVGST…DLFIPFLHAE (233 aa)) are alpha N-terminal domain (alpha-NTD). Positions 265-337 (KEIALKCIFI…FAIDLPKNKF (73 aa)) are alpha C-terminal domain (alpha-CTD).

It belongs to the RNA polymerase alpha chain family. In terms of assembly, in plastids the minimal PEP RNA polymerase catalytic core is composed of four subunits: alpha, beta, beta', and beta''. When a (nuclear-encoded) sigma factor is associated with the core the holoenzyme is formed, which can initiate transcription.

The protein localises to the plastid. The protein resides in the chloroplast. The catalysed reaction is RNA(n) + a ribonucleoside 5'-triphosphate = RNA(n+1) + diphosphate. In terms of biological role, DNA-dependent RNA polymerase catalyzes the transcription of DNA into RNA using the four ribonucleoside triphosphates as substrates. The polypeptide is DNA-directed RNA polymerase subunit alpha (Acorus calamus (Sweet flag)).